The following is a 206-amino-acid chain: Large ribosomal subunit protein uL4 (206 aa).

Positions 47 to 77 (GTHDTKTRGEVSGGGRKPWRQKGTGRARHGS) are disordered. Residues 63-77 (KPWRQKGTGRARHGS) are compositionally biased toward basic residues.

Belongs to the universal ribosomal protein uL4 family. In terms of assembly, part of the 50S ribosomal subunit.

In terms of biological role, one of the primary rRNA binding proteins, this protein initially binds near the 5'-end of the 23S rRNA. It is important during the early stages of 50S assembly. It makes multiple contacts with different domains of the 23S rRNA in the assembled 50S subunit and ribosome. Forms part of the polypeptide exit tunnel. The sequence is that of Large ribosomal subunit protein uL4 from Carboxydothermus hydrogenoformans (strain ATCC BAA-161 / DSM 6008 / Z-2901).